The following is a 359-amino-acid chain: Peptide chain release factor 1 (359 aa).

At Q236 the chain carries N5-methylglutamine.

Belongs to the prokaryotic/mitochondrial release factor family. Post-translationally, methylated by PrmC. Methylation increases the termination efficiency of RF1.

It localises to the cytoplasm. Peptide chain release factor 1 directs the termination of translation in response to the peptide chain termination codons UAG and UAA. This Streptococcus mutans serotype c (strain ATCC 700610 / UA159) protein is Peptide chain release factor 1.